Here is a 122-residue protein sequence, read N- to C-terminus: UPF0102 protein BARBAKC583_1042 (122 aa).

Belongs to the UPF0102 family.

This chain is UPF0102 protein BARBAKC583_1042, found in Bartonella bacilliformis (strain ATCC 35685 / KC583 / Herrer 020/F12,63).